We begin with the raw amino-acid sequence, 118 residues long: RxLR effector protein PITG_19617 (118 aa).

An N-terminal signal peptide occupies residues 1-21 (MRAVYILAMACAATLQASSSA). The short motif at 50–64 (RLLRVEDKEEETEEE) is the RxLR-dEER element.

It belongs to the RxLR effector family.

The protein resides in the secreted. It is found in the host nucleus. It localises to the host cytoplasm. Effector that enhances P.infestans colonization of Nicotiana benthamiana leaves. The sequence is that of RxLR effector protein PITG_19617 from Phytophthora infestans (strain T30-4) (Potato late blight agent).